Here is a 134-residue protein sequence, read N- to C-terminus: MVTLFLSPSCTSCRKARAWLVKHEVDFQEHNIITSPLSRDELMSILSFTENGTEDIISTRSKVFQKLDIDVEELSISGLIDLIAKNPSLLRRPIIMDQKRMQIGFNEDEIRAFLSRDYRKQELRQATIKAEIEG.

Cysteines 10 and 13 form a disulfide.

This sequence belongs to the ArsC family. Spx subfamily. Interacts with the C-terminal domain of the alpha subunit of the RNAP.

Its subcellular location is the cytoplasm. Global transcriptional regulator that plays a key role in stress response and exerts either positive or negative regulation of genes. Acts by interacting with the C-terminal domain of the alpha subunit of the RNA polymerase (RNAP). This interaction can enhance binding of RNAP to the promoter region of target genes and stimulate their transcription, or block interaction of RNAP with activator. The polypeptide is Global transcriptional regulator Spx (Streptococcus pyogenes serotype M6 (strain ATCC BAA-946 / MGAS10394)).